We begin with the raw amino-acid sequence, 342 residues long: Ferrochelatase (342 aa).

2 residues coordinate Fe cation: histidine 188 and glutamate 268.

The protein belongs to the ferrochelatase family.

The protein localises to the cytoplasm. It catalyses the reaction heme b + 2 H(+) = protoporphyrin IX + Fe(2+). Its pathway is porphyrin-containing compound metabolism; protoheme biosynthesis; protoheme from protoporphyrin-IX: step 1/1. Functionally, catalyzes the ferrous insertion into protoporphyrin IX. The sequence is that of Ferrochelatase from Rickettsia conorii (strain ATCC VR-613 / Malish 7).